The following is a 443-amino-acid chain: ATP-dependent protease ATPase subunit HslU (443 aa).

ATP contacts are provided by residues I18, 60 to 65 (GVGKTE), D256, E321, and R393.

Belongs to the ClpX chaperone family. HslU subfamily. As to quaternary structure, a double ring-shaped homohexamer of HslV is capped on each side by a ring-shaped HslU homohexamer. The assembly of the HslU/HslV complex is dependent on binding of ATP.

It is found in the cytoplasm. In terms of biological role, ATPase subunit of a proteasome-like degradation complex; this subunit has chaperone activity. The binding of ATP and its subsequent hydrolysis by HslU are essential for unfolding of protein substrates subsequently hydrolyzed by HslV. HslU recognizes the N-terminal part of its protein substrates and unfolds these before they are guided to HslV for hydrolysis. In Escherichia coli O17:K52:H18 (strain UMN026 / ExPEC), this protein is ATP-dependent protease ATPase subunit HslU.